The primary structure comprises 440 residues: Thymidine phosphorylase (440 aa).

It belongs to the thymidine/pyrimidine-nucleoside phosphorylase family. In terms of assembly, homodimer.

The enzyme catalyses thymidine + phosphate = 2-deoxy-alpha-D-ribose 1-phosphate + thymine. The protein operates within pyrimidine metabolism; dTMP biosynthesis via salvage pathway; dTMP from thymine: step 1/2. In terms of biological role, the enzymes which catalyze the reversible phosphorolysis of pyrimidine nucleosides are involved in the degradation of these compounds and in their utilization as carbon and energy sources, or in the rescue of pyrimidine bases for nucleotide synthesis. The protein is Thymidine phosphorylase of Proteus mirabilis (strain HI4320).